A 222-amino-acid polypeptide reads, in one-letter code: Nudix hydrolase 11 (222 aa).

The Nudix hydrolase domain occupies 31–175; the sequence is AKSSAVLVCL…EGERYLLQYF (145 aa). A Nudix box motif is present at residues 73–96; that stretch reads GGKRDQEDKDDIATALREAREEIG. Mg(2+) contacts are provided by Glu90 and Glu94. Residues 186–204 traverse the membrane as a helical segment; it reads FIIWALTAGILIRVASIVY.

Belongs to the Nudix hydrolase family. PCD1 subfamily. Mn(2+) is required as a cofactor. The cofactor is Mg(2+). In terms of tissue distribution, expressed in roots, stems and leaves.

The protein resides in the peroxisome membrane. Coenzyme A diphosphatase which mediates the cleavage of CoA into 3',5'-ADP from CoA and 4'-phosphopantetheine. Can use malonyl-CoA, hexanoyl-CoA, lauroyl-CoA, myristoyl-CoA and palmitoyl-CoA as substrates, but not isobutyryl-CoA or propionyl-CoA. This Arabidopsis thaliana (Mouse-ear cress) protein is Nudix hydrolase 11 (NUDT11).